A 156-amino-acid chain; its full sequence is Endoribonuclease YbeY (156 aa).

The Zn(2+) site is built by H117, H121, and H127.

Belongs to the endoribonuclease YbeY family. Zn(2+) serves as cofactor.

Its subcellular location is the cytoplasm. Its function is as follows. Single strand-specific metallo-endoribonuclease involved in late-stage 70S ribosome quality control and in maturation of the 3' terminus of the 16S rRNA. The protein is Endoribonuclease YbeY of Shewanella piezotolerans (strain WP3 / JCM 13877).